Consider the following 171-residue polypeptide: Putative adenylate kinase (171 aa).

ATP-binding residues include G9, G11, K12, T13, and T14. An NMP region spans residues 28-51 (SLGELIRQKGFVLGRDPIRGYLEA). Residues 99–109 (GRGYPEGKVLE) form an LID region. ATP is bound at residue R100.

The protein belongs to the adenylate kinase family. AK6 subfamily. In terms of assembly, interacts with uS11. Not a structural component of 40S pre-ribosomes, but transiently interacts with them by binding to uS11.

It catalyses the reaction AMP + ATP = 2 ADP. The catalysed reaction is ATP + H2O = ADP + phosphate + H(+). Broad-specificity nucleoside monophosphate (NMP) kinase that catalyzes the reversible transfer of the terminal phosphate group between nucleoside triphosphates and monophosphates. Also has ATPase activity. Involved in the late maturation steps of the 30S ribosomal particles, specifically 16S rRNA maturation. While NMP activity is not required for ribosome maturation, ATPase activity is. Associates transiently with small ribosomal subunit protein uS11. ATP hydrolysis breaks the interaction with uS11. May temporarily remove uS11 from the ribosome to enable a conformational change of the ribosomal RNA that is needed for the final maturation step of the small ribosomal subunit. The sequence is that of Putative adenylate kinase from Methanothermobacter thermautotrophicus (strain ATCC 29096 / DSM 1053 / JCM 10044 / NBRC 100330 / Delta H) (Methanobacterium thermoautotrophicum).